Reading from the N-terminus, the 303-residue chain is Geranylgeranyl pyrophosphate synthase (303 aa).

Residues K32, R35, and H64 each coordinate isopentenyl diphosphate. Mg(2+) is bound by residues D71 and D75. R80 contacts dimethylallyl diphosphate. R81 is an isopentenyl diphosphate binding site. Residues K158, T159, Q192, K209, and K219 each coordinate dimethylallyl diphosphate.

This sequence belongs to the FPP/GGPP synthase family. As to quaternary structure, homooligomer. Mg(2+) is required as a cofactor.

It is found in the cytoplasm. The enzyme catalyses isopentenyl diphosphate + dimethylallyl diphosphate = (2E)-geranyl diphosphate + diphosphate. It catalyses the reaction isopentenyl diphosphate + (2E)-geranyl diphosphate = (2E,6E)-farnesyl diphosphate + diphosphate. The catalysed reaction is isopentenyl diphosphate + (2E,6E)-farnesyl diphosphate = (2E,6E,10E)-geranylgeranyl diphosphate + diphosphate. It participates in isoprenoid biosynthesis; farnesyl diphosphate biosynthesis; farnesyl diphosphate from geranyl diphosphate and isopentenyl diphosphate: step 1/1. The protein operates within isoprenoid biosynthesis; geranyl diphosphate biosynthesis; geranyl diphosphate from dimethylallyl diphosphate and isopentenyl diphosphate: step 1/1. Its pathway is isoprenoid biosynthesis; geranylgeranyl diphosphate biosynthesis; geranylgeranyl diphosphate from farnesyl diphosphate and isopentenyl diphosphate: step 1/1. In terms of biological role, catalyzes the trans-addition of the three molecules of IPP onto DMAPP to form geranylgeranyl pyrophosphate, an important precursor of carotenoids and geranylated proteins. This is Geranylgeranyl pyrophosphate synthase (ggps1) from Dictyostelium discoideum (Social amoeba).